The following is an 89-amino-acid chain: Large ribosomal subunit protein bL27 (89 aa).

The tract at residues 1–21 (MAHKKAGGSSRNGRDSESKRL) is disordered.

This sequence belongs to the bacterial ribosomal protein bL27 family.

The sequence is that of Large ribosomal subunit protein bL27 from Brucella anthropi (strain ATCC 49188 / DSM 6882 / CCUG 24695 / JCM 21032 / LMG 3331 / NBRC 15819 / NCTC 12168 / Alc 37) (Ochrobactrum anthropi).